The chain runs to 412 residues: Serine hydroxymethyltransferase (412 aa).

Residues leucine 117 and 121-123 (GHL) contribute to the (6S)-5,6,7,8-tetrahydrofolate site. The residue at position 226 (lysine 226) is an N6-(pyridoxal phosphate)lysine.

Belongs to the SHMT family. Homodimer. The cofactor is pyridoxal 5'-phosphate.

The protein resides in the cytoplasm. It carries out the reaction (6R)-5,10-methylene-5,6,7,8-tetrahydrofolate + glycine + H2O = (6S)-5,6,7,8-tetrahydrofolate + L-serine. The protein operates within one-carbon metabolism; tetrahydrofolate interconversion. Its pathway is amino-acid biosynthesis; glycine biosynthesis; glycine from L-serine: step 1/1. In terms of biological role, catalyzes the reversible interconversion of serine and glycine with tetrahydrofolate (THF) serving as the one-carbon carrier. This reaction serves as the major source of one-carbon groups required for the biosynthesis of purines, thymidylate, methionine, and other important biomolecules. Also exhibits THF-independent aldolase activity toward beta-hydroxyamino acids, producing glycine and aldehydes, via a retro-aldol mechanism. This Staphylococcus saprophyticus subsp. saprophyticus (strain ATCC 15305 / DSM 20229 / NCIMB 8711 / NCTC 7292 / S-41) protein is Serine hydroxymethyltransferase.